Here is a 266-residue protein sequence, read N- to C-terminus: Glioma pathogenesis-related protein 1 (266 aa).

An N-terminal signal peptide occupies residues 1 to 21 (MRVTLATIAWMVSFVSNYSHT). An SCP domain is found at 38–175 (VRIHNKFRSE…SNGAHFICNY (138 aa)). A helical membrane pass occupies residues 233–255 (YTSLFLIVNSVILILSVIITILV).

It belongs to the CRISP family. As to expression, according to PubMed:8973356, it is ubiquitously expressed with high levels in lung and kidney and low levels in heart and liver. Highly expressed in cell lines derived from nervous system tumors arising from glia, low or absent in non-glial-derived nervous system tumor cell lines. Also found in fetal kidney. According to PubMed:7607567 it is expressed only in brain tumor glioblastoma multiforme/astrocytoma and not in other nervous system tumors or normal fetal or adult tissues.

The protein resides in the membrane. The polypeptide is Glioma pathogenesis-related protein 1 (GLIPR1) (Homo sapiens (Human)).